The chain runs to 494 residues: Transcription factor SOX-9 (494 aa).

Disordered stretches follow at residues 1–66 (MNLL…ESDE) and 159–275 (ERLR…FRDV). The span at 27 to 42 (SDDSAGSPCPSGSGSD) shows a compositional bias: low complexity. Basic and acidic residues-rich tracts occupy residues 56–66 (GDPDLKKESDE) and 159–174 (ERLRVQHKKDHPDYKY). Residues 63 to 103 (ESDEDKFPVCIREAVSQVLKGYDWTLVPMPVRVNGSSKNKP) are dimerization (DIM). Residues 63–103 (ESDEDKFPVCIREAVSQVLKGYDWTLVPMPVRVNGSSKNKP) form a PQA region. Ser-64 is subject to Phosphoserine. The segment at residues 105-173 (VKRPMNAFMV…QHKKDHPDYK (69 aa)) is a DNA-binding region (HMG box). At Ser-181 the chain carries Phosphoserine. Positions 211–222 (SPQSSSSISEVH) are enriched in low complexity. Residues 224–309 (PGEHSGQSQG…LPPNGHPGVP (86 aa)) are transactivation domain (TAM). 2 short sequence motifs (9aaTAD) span residues 277–286 (IGELSSDVIS) and 292–300 (DVNEFDQYL). Residues 326–337 (SSASSPAGAGHA) show a composition bias toward low complexity. The interval 326–402 (SSASSPAGAG…PQQQQQQQQQ (77 aa)) is disordered. Residues 344–353 (PQPPQPPAQP) show a composition bias toward pro residues. Residues 372–494 (RPHIKTEQLS…QPVYTQLTRP (123 aa)) form a transactivation domain (TAC) region. Residue Lys-376 forms a Glycyl lysine isopeptide (Lys-Gly) (interchain with G-Cter in SUMO) linkage. Residues 378 to 387 (EQLSPSHYSE) show a composition bias toward polar residues. Over residues 388–402 (QQQHSPQQQQQQQQQ) the composition is skewed to low complexity. The short motif at 445-453 (GGLYSTFTY) is the 9aaTAD 3 element. The segment at 462 to 494 (YTPIADTSGVPSIPQTHSPQHWEQPVYTQLTRP) is disordered. The span at 470–494 (GVPSIPQTHSPQHWEQPVYTQLTRP) shows a compositional bias: polar residues.

In terms of assembly, interacts with SNAI2; triggers neural crest delamination in a phosphorylation dependent manner. Interacts with UBE2I. In terms of processing, phosphorylated at Ser-181 in the developing neural tube. Phosphorylation at either Ser-64 or Ser-181 is required for sumoylation, but phosphorylation is not dependent on sumoylation. Sumoylation is enhanced by PKA. Phosphorylation is required for interaction with SNAI2 to trigger neural crest delamination and for an efficient trunk neural crest delamination, whereas sumoylation plays a less significant role. Phosphorylation and sumoylation are induced by BMP signaling pathway. Sumoylated at Lys-376; phosphorylation at either Ser-64 or Ser-181 is required for sumoylation. Sumoylation is induced by BMP signaling pathway.

The protein localises to the nucleus. Its function is as follows. Transcription factor that plays a key role in chondrocytes differentiation and skeletal development. Specifically binds the 5'-ACAAAG-3' DNA motif present in enhancers and super-enhancers and promotes expression of genes important for chondrogenesis, including COL2A1. Plays a central role in successive steps of chondrocyte differentiation. Absolutely required for precartilaginous condensation, the first step in chondrogenesis during which skeletal progenitors differentiate into prechondrocytes. Together with SOX5 and SOX6, required for overt chondrogenesis when condensed prechondrocytes differentiate into early stage chondrocytes, the second step in chondrogenesis. Later, required to direct hypertrophic maturation and block osteoblast differentiation of growth plate chondrocytes: maintains chondrocyte columnar proliferation, delays prehypertrophy and then prevents osteoblastic differentiation of chondrocytes. Also required for chondrocyte hypertrophy, both indirectly, by keeping the lineage fate of chondrocytes, and directly, by remaining present in upper hypertrophic cells. Low lipid levels are the main nutritional determinant for chondrogenic commitment of skeletal progenitor cells: when lipids levels are low, FOXO transcription factors promote expression of SOX9, which induces chondrogenic commitment and suppresses fatty acid oxidation. In addition to cartilage development, also acts as a regulator of proliferation and differentiation in epithelial stem/progenitor cells. In response to bone morphogenetic protein stimulus, phosphorylation is induced and then sumoylation, allowing cooperation with SNAI2 to trigger neural crest delamination. The protein is Transcription factor SOX-9 of Gallus gallus (Chicken).